The sequence spans 91 residues: Non-hemolytic enterotoxin 105 kDa component (91 aa).

Zn(2+) is required as a cofactor.

It is found in the secreted. This protein is a metalloprotease with gelatinolytic and collagenolytic activity and is a component of the non-hemolytic enterotoxin complex (NHE). The sequence is that of Non-hemolytic enterotoxin 105 kDa component from Bacillus cereus.